The sequence spans 159 residues: Transcriptional repressor NrdR (159 aa).

The tract at residues 1-26 (MRCPFCAHDNSQVKDSRPSEDNTSIR) is disordered. A zinc finger lies at 3-34 (CPFCAHDNSQVKDSRPSEDNTSIRRRRQCEGC). A compositionally biased stretch (basic and acidic residues) spans 11–24 (SQVKDSRPSEDNTS). Residues 49–139 (VVVVKSGERR…VYRDFTEARD (91 aa)) form the ATP-cone domain.

Belongs to the NrdR family. The cofactor is Zn(2+).

Functionally, negatively regulates transcription of bacterial ribonucleotide reductase nrd genes and operons by binding to NrdR-boxes. This chain is Transcriptional repressor NrdR, found in Novosphingobium aromaticivorans (strain ATCC 700278 / DSM 12444 / CCUG 56034 / CIP 105152 / NBRC 16084 / F199).